A 178-amino-acid polypeptide reads, in one-letter code: MSGGKYVDSEGHLYTVPIREQGNIYKPNNKAMADELSEKQVYDAHTKEIDLVNRDPKHLNDDVVKIDFEDVIAEPEGTHSFDGIWKASFTTFTVTKYWFYRLLSALFGIPMALIWGIYFAILSFLHIWAVVPCIKSFLIEIQCISRVYSIYIHTVCDPLFEAIGKIFSNVRISLQKEI.

At serine 2 the chain carries N-acetylserine. Serine 2 carries the post-translational modification Phosphoserine. The segment at serine 2–valine 94 is required for homooligomerization. Residues serine 2–serine 104 lie on the Cytoplasmic side of the membrane. Lysine 5 bears the N6-acetyllysine; alternate mark. A Glycyl lysine isopeptide (Lys-Gly) (interchain with G-Cter in ubiquitin); alternate cross-link involves residue lysine 5. Phosphotyrosine is present on tyrosine 6. A Phosphoserine modification is found at serine 9. Tyrosine 14 bears the Phosphotyrosine; by ABL1 mark. The residue at position 25 (tyrosine 25) is a Phosphotyrosine. Residues lysine 26 and lysine 30 each participate in a glycyl lysine isopeptide (Lys-Gly) (interchain with G-Cter in ubiquitin) cross-link. Serine 37 bears the Phosphoserine mark. Glycyl lysine isopeptide (Lys-Gly) (interchain with G-Cter in ubiquitin) cross-links involve residues lysine 39, lysine 47, and lysine 57. Residues aspartate 82–valine 94 are interaction with CAVIN3. The helical intramembrane region spans alanine 105–leucine 125. Residues histidine 126 to isoleucine 178 lie on the Cytoplasmic side of the membrane. Residues valine 131–glutamine 142 are interacts with SPRY1, SPRY2, SPRY3 and SPRY4. 3 S-palmitoyl cysteine lipidation sites follow: cysteine 133, cysteine 143, and cysteine 156. The tract at residues serine 149–phenylalanine 160 is interacts with SPRY1, SPRY2, and SPRY4. The tract at residues phenylalanine 167–isoleucine 178 is interacts with SPRY1, SPRY2, SPRY3 and SPRY4.

This sequence belongs to the caveolin family. Homooligomer. Interacts with GLIPR2. Interacts with NOSTRIN. Interacts with SNAP25 and STX1A. Interacts (via the N-terminus) with DPP4; the interaction is direct. Interacts with CTNNB1, CDH1 and JUP. Interacts with PACSIN2; this interaction induces membrane tubulation. Interacts with SLC7A9. Interacts with BMX and BTK. Interacts with TGFBR1. Interacts with CAVIN3 (via leucine-zipper domain) in a cholesterol-sensitive manner. Interacts with CAVIN1. Interacts with EHD2 in a cholesterol-dependent manner. Forms a ternary complex with UBXN6 and VCP; mediates CAV1 targeting to lysosomes for degradation. Interacts with ABCG1; this interaction regulates ABCG1-mediated cholesterol efflux. Interacts with NEU3; this interaction enhances NEU3 sialidase activity within caveola. Interacts (via C-terminus) with SPRY1, SPRY2 (via C-terminus), SPRY3, and SPRY4. Interacts with IGFBP5; this interaction allows trafficking of IGFBP5 from the plasma membrane to the nucleus. Phosphorylated at Tyr-14 by ABL1 in response to oxidative stress. Post-translationally, ubiquitinated. Undergo monoubiquitination and multi- and/or polyubiquitination. Monoubiquitination of N-terminal lysines promotes integration in a ternary complex with UBXN6 and VCP which promotes oligomeric CAV1 targeting to lysosomes for degradation. Ubiquitinated by ZNRF1; leading to degradation and modulation of the TLR4-mediated immune response.

The protein localises to the golgi apparatus membrane. The protein resides in the cell membrane. Its subcellular location is the membrane. It is found in the caveola. It localises to the membrane raft. Functionally, may act as a scaffolding protein within caveolar membranes. Forms a stable heterooligomeric complex with CAV2 that targets to lipid rafts and drives caveolae formation. Mediates the recruitment of CAVIN proteins (CAVIN1/2/3/4) to the caveolae. Interacts directly with G-protein alpha subunits and can functionally regulate their activity. Involved in the costimulatory signal essential for T-cell receptor (TCR)-mediated T-cell activation. Its binding to DPP4 induces T-cell proliferation and NF-kappa-B activation in a T-cell receptor/CD3-dependent manner. Recruits CTNNB1 to caveolar membranes and may regulate CTNNB1-mediated signaling through the Wnt pathway. Negatively regulates TGFB1-mediated activation of SMAD2/3 by mediating the internalization of TGFBR1 from membrane rafts leading to its subsequent degradation. Binds 20(S)-hydroxycholesterol (20(S)-OHC). The chain is Caveolin-1 (CAV1) from Aotus nancymaae (Ma's night monkey).